A 258-amino-acid chain; its full sequence is Acyl-[acyl-carrier-protein]--UDP-N-acetylglucosamine O-acyltransferase (258 aa).

Belongs to the transferase hexapeptide repeat family. LpxA subfamily. In terms of assembly, homotrimer.

The protein localises to the cytoplasm. The catalysed reaction is a (3R)-hydroxyacyl-[ACP] + UDP-N-acetyl-alpha-D-glucosamine = a UDP-3-O-[(3R)-3-hydroxyacyl]-N-acetyl-alpha-D-glucosamine + holo-[ACP]. It participates in glycolipid biosynthesis; lipid IV(A) biosynthesis; lipid IV(A) from (3R)-3-hydroxytetradecanoyl-[acyl-carrier-protein] and UDP-N-acetyl-alpha-D-glucosamine: step 1/6. Functionally, involved in the biosynthesis of lipid A, a phosphorylated glycolipid that anchors the lipopolysaccharide to the outer membrane of the cell. The polypeptide is Acyl-[acyl-carrier-protein]--UDP-N-acetylglucosamine O-acyltransferase (Pseudomonas putida (strain ATCC 47054 / DSM 6125 / CFBP 8728 / NCIMB 11950 / KT2440)).